The following is a 695-amino-acid chain: Probable pre-mRNA-splicing factor ATP-dependent RNA helicase DEAH9 (695 aa).

One can recognise a Helicase ATP-binding domain in the interval 58–223 (LYLVENHATT…FNSSKKRHAP (166 aa)). ATP is bound at residue 71 to 78 (GETGSGKT). Residues 170–173 (DEAH) carry the DEAH box motif. Residues 261 to 438 (SVVSTILLIN…STVIQLKALG (178 aa)) enclose the Helicase C-terminal domain.

This sequence belongs to the DEAD box helicase family. DEAH subfamily. DDX35 sub-subfamily.

It catalyses the reaction ATP + H2O = ADP + phosphate + H(+). In terms of biological role, may be involved in pre-mRNA splicing. The protein is Probable pre-mRNA-splicing factor ATP-dependent RNA helicase DEAH9 of Arabidopsis thaliana (Mouse-ear cress).